The primary structure comprises 60 residues: MICYSHKTPQNSATITCEEKTCYKFVTKLPGVILARGCGCPKKEIFRKSIHCCRSDKCNE.

4 disulfides stabilise this stretch: Cys3–Cys22, Cys17–Cys38, Cys40–Cys52, and Cys53–Cys58.

This sequence belongs to the three-finger toxin family. Short-chain subfamily. Orphan group XI sub-subfamily. As to expression, expressed by the venom gland.

It is found in the secreted. In Dendroaspis viridis (Western green mamba), this protein is Toxin 4.9.6.